Here is a 548-residue protein sequence, read N- to C-terminus: MGYDDVITHLGEFGPYQKRIYYLLCLPAIVCAFHKLAGVFLLAKPDFRCALPYENGSIYELSPHLWNLSYPENERCSYYDVDYTEEYLNGSIPRSSNETKTCSSYVYDRSKYLNSAVTEWNLVCSRSLLSATSDSLFMLGVLLGSLIFGQMSDKLGRKPTFFASLVLQLIFGVLAAVAPEYFSYTISRMIVGATTSGVFLVAYVIALEMVGSSYRLFAGVAMQMFFSVGFMLTAGFAYFIHDWRWLQIAITLPGLLFLCYYWIIPESARWLLMKGRKDEAFVIIEKAAKENKVEVPNEIYEQLVDEVAEKKKQDEMAASQPAATVFDLLRYPNLRRKTLLIFFDWFVNSGVYYGLSWNTNNLGGNQLVNFMISGAVEIPGYTLLLFTLNRWGRRSILCGTMMVAGISLLATIFVPSDMNWLIVACAMIGKLAITSSYGTIYIFSAEQFPTVVRNVGLGASSMVARVGGILAPYLKLLGEIWRPLPLIICGALSLTAGLLSLLLPETLNKPMPETIEDGENFGKKPAPQETAEEGGTQELSGMLNGKSG.

Residues 1–22 lie on the Cytoplasmic side of the membrane; the sequence is MGYDDVITHLGEFGPYQKRIYY. A helical membrane pass occupies residues 23-43; the sequence is LLCLPAIVCAFHKLAGVFLLA. The Extracellular portion of the chain corresponds to 44 to 127; that stretch reads KPDFRCALPY…TEWNLVCSRS (84 aa). N-linked (GlcNAc...) asparagine glycans are attached at residues Asn-55, Asn-67, Asn-89, and Asn-97. A helical transmembrane segment spans residues 128-148; sequence LLSATSDSLFMLGVLLGSLIF. The Cytoplasmic portion of the chain corresponds to 149–158; it reads GQMSDKLGRK. The chain crosses the membrane as a helical span at residues 159 to 179; sequence PTFFASLVLQLIFGVLAAVAP. Over 180–189 the chain is Extracellular; that stretch reads EYFSYTISRM. The helical transmembrane segment at 190-210 threads the bilayer; it reads IVGATTSGVFLVAYVIALEMV. Topologically, residues 211–219 are cytoplasmic; sequence GSSYRLFAG. A helical membrane pass occupies residues 220-240; it reads VAMQMFFSVGFMLTAGFAYFI. The Extracellular portion of the chain corresponds to 241 to 244; that stretch reads HDWR. The chain crosses the membrane as a helical span at residues 245 to 265; sequence WLQIAITLPGLLFLCYYWIIP. Residues 266-337 lie on the Cytoplasmic side of the membrane; that stretch reads ESARWLLMKG…LLRYPNLRRK (72 aa). The chain crosses the membrane as a helical span at residues 338 to 358; the sequence is TLLIFFDWFVNSGVYYGLSWN. Residues 359–366 are Extracellular-facing; it reads TNNLGGNQ. Residues 367-387 traverse the membrane as a helical segment; sequence LVNFMISGAVEIPGYTLLLFT. The Cytoplasmic portion of the chain corresponds to 388-395; the sequence is LNRWGRRS. A helical membrane pass occupies residues 396 to 416; that stretch reads ILCGTMMVAGISLLATIFVPS. Topologically, residues 417-419 are extracellular; that stretch reads DMN. A helical transmembrane segment spans residues 420 to 440; it reads WLIVACAMIGKLAITSSYGTI. Over 441-453 the chain is Cytoplasmic; sequence YIFSAEQFPTVVR. Residues 454-474 form a helical membrane-spanning segment; the sequence is NVGLGASSMVARVGGILAPYL. Residues 475–482 are Extracellular-facing; sequence KLLGEIWR. A helical membrane pass occupies residues 483-503; sequence PLPLIICGALSLTAGLLSLLL. Residues 504 to 548 lie on the Cytoplasmic side of the membrane; it reads PETLNKPMPETIEDGENFGKKPAPQETAEEGGTQELSGMLNGKSG. The segment at 512–548 is disordered; it reads PETIEDGENFGKKPAPQETAEEGGTQELSGMLNGKSG.

The protein belongs to the major facilitator (TC 2.A.1) superfamily. Organic cation transporter (TC 2.A.1.19) family. As to expression, expressed in embryos and adults at low level. Expressed at higher level in third instar larvae.

The protein localises to the membrane. In terms of biological role, probably transports organic cations. This chain is Organic cation transporter protein (Orct), found in Drosophila melanogaster (Fruit fly).